Consider the following 417-residue polypeptide: Serine hydroxymethyltransferase (417 aa).

(6S)-5,6,7,8-tetrahydrofolate contacts are provided by residues L120 and 124 to 126 (GHL). K229 is modified (N6-(pyridoxal phosphate)lysine).

Belongs to the SHMT family. Homodimer. Requires pyridoxal 5'-phosphate as cofactor.

It is found in the cytoplasm. It carries out the reaction (6R)-5,10-methylene-5,6,7,8-tetrahydrofolate + glycine + H2O = (6S)-5,6,7,8-tetrahydrofolate + L-serine. Its pathway is one-carbon metabolism; tetrahydrofolate interconversion. The protein operates within amino-acid biosynthesis; glycine biosynthesis; glycine from L-serine: step 1/1. Its function is as follows. Catalyzes the reversible interconversion of serine and glycine with tetrahydrofolate (THF) serving as the one-carbon carrier. This reaction serves as the major source of one-carbon groups required for the biosynthesis of purines, thymidylate, methionine, and other important biomolecules. Also exhibits THF-independent aldolase activity toward beta-hydroxyamino acids, producing glycine and aldehydes, via a retro-aldol mechanism. This is Serine hydroxymethyltransferase from Anaeromyxobacter dehalogenans (strain 2CP-1 / ATCC BAA-258).